Reading from the N-terminus, the 190-residue chain is NADH-ubiquinone oxidoreductase 75 kDa subunit, mitochondrial (190 aa).

Belongs to the complex I 75 kDa subunit family. As to quaternary structure, core subunit of respiratory chain NADH dehydrogenase (Complex I) which is composed of 45 different subunits. This is the largest subunit of complex I and it is a component of the iron-sulfur (IP) fragment of the enzyme. Complex I associates with ubiquinol-cytochrome reductase complex (Complex III) to form supercomplexes. Interacts with MDM2 and AKAP1. The cofactor is [2Fe-2S] cluster. [4Fe-4S] cluster serves as cofactor.

It localises to the mitochondrion inner membrane. The enzyme catalyses a ubiquinone + NADH + 5 H(+)(in) = a ubiquinol + NAD(+) + 4 H(+)(out). Its function is as follows. Core subunit of the mitochondrial membrane respiratory chain NADH dehydrogenase (Complex I) which catalyzes electron transfer from NADH through the respiratory chain, using ubiquinone as an electron acceptor. Essential for catalysing the entry and efficient transfer of electrons within complex I. Plays a key role in the assembly and stability of complex I and participates in the association of complex I with ubiquinol-cytochrome reductase complex (Complex III) to form supercomplexes. In Mesocricetus auratus (Golden hamster), this protein is NADH-ubiquinone oxidoreductase 75 kDa subunit, mitochondrial.